The primary structure comprises 89 residues: Small ribosomal subunit protein uS15 (89 aa).

Belongs to the universal ribosomal protein uS15 family. Part of the 30S ribosomal subunit. Forms a bridge to the 50S subunit in the 70S ribosome, contacting the 23S rRNA.

Functionally, one of the primary rRNA binding proteins, it binds directly to 16S rRNA where it helps nucleate assembly of the platform of the 30S subunit by binding and bridging several RNA helices of the 16S rRNA. Its function is as follows. Forms an intersubunit bridge (bridge B4) with the 23S rRNA of the 50S subunit in the ribosome. The protein is Small ribosomal subunit protein uS15 of Acidiphilium cryptum (strain JF-5).